Consider the following 141-residue polypeptide: Large ribosomal subunit protein uL11 (141 aa).

Belongs to the universal ribosomal protein uL11 family. Part of the ribosomal stalk of the 50S ribosomal subunit. Interacts with L10 and the large rRNA to form the base of the stalk. L10 forms an elongated spine to which L12 dimers bind in a sequential fashion forming a multimeric L10(L12)X complex. One or more lysine residues are methylated.

In terms of biological role, forms part of the ribosomal stalk which helps the ribosome interact with GTP-bound translation factors. The polypeptide is Large ribosomal subunit protein uL11 (Chlamydia pneumoniae (Chlamydophila pneumoniae)).